A 603-amino-acid chain; its full sequence is UvrABC system protein C (603 aa).

The GIY-YIG domain maps to 15-92 (DQPGCYLMKD…IKKHDPRFNI (78 aa)). Residues 197–232 (KTVKNDLMKKMQEAAENMEFEKAGEFRDQINAIETT) enclose the UVR domain.

Belongs to the UvrC family. As to quaternary structure, interacts with UvrB in an incision complex.

Its subcellular location is the cytoplasm. The UvrABC repair system catalyzes the recognition and processing of DNA lesions. UvrC both incises the 5' and 3' sides of the lesion. The N-terminal half is responsible for the 3' incision and the C-terminal half is responsible for the 5' incision. The protein is UvrABC system protein C of Listeria monocytogenes serotype 4a (strain HCC23).